A 342-amino-acid chain; its full sequence is MNTNDFDFELPEELIAQTPLEKRDSSKLLIIDHRQKTMVDSHFDHIIDQLNPGDALVMNNTRVLPARLYGEKPDTHGHVELLLLKNTQGDQWEVLAKPAKRLKVGSQVNFGNGHLKATIIDELEHGGRIVEFSYDGIFLEVLESLGEMPLPPYIHEKLEDAERYQTVYAKENGSAAAPTAGLHFTTDLLKKIEAKGVHLVYLTLHVGLGTFRPVSVDNLDEHDMHSEFYSLSEEAAQTLRDVKQAGGRVVAVGTTSIRTLETIGSKFQGDIQADSGWTNIFIKPGYQFKVVDAFSTNFHLPKSTLVMLVSAFAGRDFVLEAYRHAVDEKYRFFSFGDAMFVN.

The protein belongs to the QueA family. Monomer.

The protein localises to the cytoplasm. The catalysed reaction is 7-aminomethyl-7-carbaguanosine(34) in tRNA + S-adenosyl-L-methionine = epoxyqueuosine(34) in tRNA + adenine + L-methionine + 2 H(+). The protein operates within tRNA modification; tRNA-queuosine biosynthesis. Functionally, transfers and isomerizes the ribose moiety from AdoMet to the 7-aminomethyl group of 7-deazaguanine (preQ1-tRNA) to give epoxyqueuosine (oQ-tRNA). The sequence is that of S-adenosylmethionine:tRNA ribosyltransferase-isomerase from Streptococcus pyogenes serotype M2 (strain MGAS10270).